Consider the following 1247-residue polypeptide: ABC transporter B family member 14 (1247 aa).

One can recognise an ABC transmembrane type-1 1 domain in the interval 48-337 (MFLGGLGTCI…AVPSLSAISK (290 aa)). 6 consecutive transmembrane segments (helical) span residues 49–69 (FLGG…FVFF), 95–115 (LYLV…VACW), 172–192 (HVLR…LSVW), 196–216 (LLTL…AIVM), 277–297 (LGVG…FWYA), and 315–335 (ILNV…LSAI). 2 N-linked (GlcNAc...) asparagine glycosylation sites follow: Asn-362 and Asn-392. The 236-residue stretch at 373–608 (IEFCGVSFAY…GGDYATLVNC (236 aa)) folds into the ABC transporter 1 domain. 407–414 (GPSGSGKS) is a binding site for ATP. In terms of domain architecture, ABC transmembrane type-1 2 spans 679 to 971 (EWLYALLGSI…TLALTPDIVK (293 aa)). 2 consecutive transmembrane segments (helical) span residues 680–700 (WLYA…PALF) and 727–747 (AIIF…QHYF). The N-linked (GlcNAc...) asparagine glycan is linked to Asn-780. 3 helical membrane-spanning segments follow: residues 807-824 (IVQN…AFFY), 830-850 (AVVT…QLFL), and 915-935 (LSQC…SVLI). A glycan (N-linked (GlcNAc...) asparagine) is linked at Asn-938. A helical transmembrane segment spans residues 949 to 969 (FMVLLVTAYSVAETLALTPDI). Positions 1006–1242 (IEFRNVSFAY…SDGFYKKLTS (237 aa)) constitute an ABC transporter 2 domain. Asn-1010 carries an N-linked (GlcNAc...) asparagine glycan. Position 1041–1048 (1041–1048 (GPSGSGKS)) interacts with ATP. Asn-1108 carries an N-linked (GlcNAc...) asparagine glycan.

It belongs to the ABC transporter superfamily. ABCB family. Multidrug resistance exporter (TC 3.A.1.201) subfamily.

The protein resides in the membrane. The chain is ABC transporter B family member 14 (ABCB14) from Arabidopsis thaliana (Mouse-ear cress).